The sequence spans 414 residues: Serine hydroxymethyltransferase (414 aa).

(6S)-5,6,7,8-tetrahydrofolate contacts are provided by residues L118 and 122–124 (GHL). Position 226 is an N6-(pyridoxal phosphate)lysine (K226). A (6S)-5,6,7,8-tetrahydrofolate-binding site is contributed by 353–355 (SPF).

The protein belongs to the SHMT family. Homodimer. Pyridoxal 5'-phosphate is required as a cofactor.

It localises to the cytoplasm. It catalyses the reaction (6R)-5,10-methylene-5,6,7,8-tetrahydrofolate + glycine + H2O = (6S)-5,6,7,8-tetrahydrofolate + L-serine. The protein operates within one-carbon metabolism; tetrahydrofolate interconversion. It functions in the pathway amino-acid biosynthesis; glycine biosynthesis; glycine from L-serine: step 1/1. Its function is as follows. Catalyzes the reversible interconversion of serine and glycine with tetrahydrofolate (THF) serving as the one-carbon carrier. This reaction serves as the major source of one-carbon groups required for the biosynthesis of purines, thymidylate, methionine, and other important biomolecules. Also exhibits THF-independent aldolase activity toward beta-hydroxyamino acids, producing glycine and aldehydes, via a retro-aldol mechanism. This chain is Serine hydroxymethyltransferase, found in Blochmanniella floridana.